We begin with the raw amino-acid sequence, 375 residues long: Protein kinase MCK1 (375 aa).

The residue at position 2 (serine 2) is an N-acetylserine. The 293-residue stretch at valine 35–phenylalanine 327 folds into the Protein kinase domain. ATP is bound by residues isoleucine 41–valine 49 and lysine 68. Aspartate 164 acts as the Proton acceptor in catalysis. At serine 198 the chain carries Phosphoserine. Residue tyrosine 199 is modified to Phosphotyrosine. Serine 202 is modified (phosphoserine).

Belongs to the protein kinase superfamily. Ser/Thr protein kinase family. Post-translationally, phosphorylated at tyrosine and serine.

It carries out the reaction L-seryl-[protein] + ATP = O-phospho-L-seryl-[protein] + ADP + H(+). It catalyses the reaction L-threonyl-[protein] + ATP = O-phospho-L-threonyl-[protein] + ADP + H(+). The enzyme catalyses L-tyrosyl-[protein] + ATP = O-phospho-L-tyrosyl-[protein] + ADP + H(+). Functionally, may be an autophosphorylating tyrosine kinase, a bifunctional (serine/tyrosine-specific) protein kinase, or a serine kinase that is a substrate for an associated tyrosine kinase. MCK1 is a transcriptional activator of IME1, it stimulates spore maturation, and play a positive regulatory role in both mitotic centromere function and activation of early meiotic gene expression. This is Protein kinase MCK1 (MCK1) from Saccharomyces cerevisiae (strain ATCC 204508 / S288c) (Baker's yeast).